The chain runs to 78 residues: Cytochrome c oxidase subunit 8, mitochondrial (78 aa).

The transit peptide at 1-27 (MLCQQMIRTTAKRSSNIMTRPIIMKRS) directs the protein to the mitochondrion. Topologically, residues 28–51 (VHFKDGVYENIPFKVKGRKTPYAL) are mitochondrial matrix. The helical transmembrane segment at 52–73 (SHFGFFAIGFAVPFVACYVQLK) threads the bilayer. A topological domain (mitochondrial intermembrane) is located at residue Lys-74. Residues 75-78 (SGAF) constitute a propeptide that is removed on maturation.

This sequence belongs to the cytochrome c oxidase VIIc family. As to quaternary structure, component of the cytochrome c oxidase (complex IV, CIV), a multisubunit enzyme composed of 12 subunits. The complex is composed of a catalytic core of 3 subunits COX1, COX2 and COX3, encoded in the mitochondrial DNA, and 9 supernumerary subunits COX4, COX5A (or COX5B), COX6, COX7, COX8, COX9, COX12, COX13 and COX26, which are encoded in the nuclear genome. The complex exists as a monomer or a dimer and forms supercomplexes (SCs) in the inner mitochondrial membrane with a dimer of ubiquinol-cytochrome c oxidoreductase (cytochrome b-c1 complex, complex III, CIII), resulting in 2 different assemblies (supercomplexes III(2)IV and III(2)IV(2)).

Its subcellular location is the mitochondrion inner membrane. It participates in energy metabolism; oxidative phosphorylation. Its function is as follows. Component of the cytochrome c oxidase, the last enzyme in the mitochondrial electron transport chain which drives oxidative phosphorylation. The respiratory chain contains 3 multisubunit complexes succinate dehydrogenase (complex II, CII), ubiquinol-cytochrome c oxidoreductase (cytochrome b-c1 complex, complex III, CIII) and cytochrome c oxidase (complex IV, CIV), that cooperate to transfer electrons derived from NADH and succinate to molecular oxygen, creating an electrochemical gradient over the inner membrane that drives transmembrane transport and the ATP synthase. Cytochrome c oxidase is the component of the respiratory chain that catalyzes the reduction of oxygen to water. Electrons originating from reduced cytochrome c in the intermembrane space (IMS) are transferred via the dinuclear copper A center (CU(A)) of COX2 and heme A of COX1 to the active site in COX1, a binuclear center (BNC) formed by heme A3 and copper B (CU(B)). The BNC reduces molecular oxygen to 2 water molecules using 4 electrons from cytochrome c in the IMS and 4 protons from the mitochondrial matrix. This Saccharomyces cerevisiae (strain ATCC 204508 / S288c) (Baker's yeast) protein is Cytochrome c oxidase subunit 8, mitochondrial (COX8).